Reading from the N-terminus, the 273-residue chain is SUMO-1 cysteine protease S273R (273 aa).

Active-site residues include His-168 and Asn-187. Residue Gln-226 participates in substrate binding. The active-site Nucleophile is the Cys-232.

Belongs to the peptidase C63 family.

It localises to the host cytoplasm. The protein resides in the virion. Its function is as follows. Cysteine protease that plays several role during infection including processing of the structural polyprotein or inhibition of the host immune response. Catalyzes the maturation of the pp220 and pp62 polyprotein precursors into core-shell proteins. Plays a role in the disruption of host pyroptosis via specific cleavage of gasdermin D/GSDMD. In addition, strongly decreases the host cGAS-STING signaling by targeting IKBKE via its enzymatic activity. Also impairs host FOXJ1-mediated antiviral effect via degradation of FOXJ1. The protein is SUMO-1 cysteine protease S273R of Ornithodoros (relapsing fever ticks).